We begin with the raw amino-acid sequence, 1484 residues long: Glutamate receptor ionotropic, NMDA 2B (1484 aa).

A signal peptide spans 1-26; the sequence is MKPRAECCSPKFWLVLAVLAVSGSRA. The Extracellular portion of the chain corresponds to 27 to 555; sequence RSQKSPPSIG…SPSAFLEPFS (529 aa). Asn74 is a glycosylation site (N-linked (GlcNAc...) asparagine). A disulfide bridge links Cys86 with Cys321. Residues His127 and Glu284 each contribute to the Zn(2+) site. N-linked (GlcNAc...) asparagine glycans are attached at residues Asn341, Asn348, Asn444, and Asn491. Cystine bridges form between Cys429–Cys456 and Cys436–Cys457. L-glutamate contacts are provided by Thr514 and Arg519. An N-linked (GlcNAc...) asparagine glycan is attached at Asn542. Residues 556–576 traverse the membrane as a helical segment; the sequence is ADVWVMMFVMLLIVSAVAVFV. The Cytoplasmic segment spans residues 577–601; it reads FEYFSPVGYNRCLADGREPGGPSFT. The discontinuously helical intramembrane region spans 602 to 613; it reads IGKAIWLLWGLV. Residues 604 to 623 are pore-forming; it reads KAIWLLWGLVFNNSVPVQNP. Topologically, residues 614–627 are cytoplasmic; sequence FNNSVPVQNPKGTT. The chain crosses the membrane as a helical span at residues 628–647; sequence SKIMVSVWAFFAVIFLASYT. Over 648-819 the chain is Extracellular; it reads ANLAAFMIQE…SSQLDIDNMA (172 aa). N-linked (GlcNAc...) asparagine glycosylation occurs at Asn688. L-glutamate-binding positions include 690-691 and Asp732; that span reads ST. A helical transmembrane segment spans residues 820–835; sequence GVFYMLGAAMALSLIT. Over 836-1484 the chain is Cytoplasmic; it reads FICEHLFYWQ…EKLSSIESDV (649 aa). Phosphoserine occurs at positions 882, 886, 917, and 920. A phosphotyrosine mark is found at Tyr962 and Tyr1039. Phosphoserine occurs at positions 1058, 1061, and 1064. The disordered stretch occupies residues 1074–1097; it reads EGNAAKRRKQQYKDSLKKRPASAK. A phosphotyrosine mark is found at Tyr1109 and Tyr1133. Ser1143 bears the Phosphoserine mark. Position 1155 is a phosphotyrosine (Tyr1155). The tract at residues 1161-1194 is disordered; that stretch reads DFKRDSVSGGGPCTNRSHIKHGTGDKHGVVSGVP. Ser1255 and Ser1259 each carry phosphoserine. The tract at residues 1271 to 1301 is disordered; sequence AVTSNASTTKYPQSPTNSKAQKKNRNKLRRQ. Positions 1272–1289 are enriched in polar residues; the sequence is VTSNASTTKYPQSPTNSK. Positions 1290 to 1301 are enriched in basic residues; sequence AQKKNRNKLRRQ. The interaction with DAPK1 stretch occupies residues 1292–1304; sequence KKNRNKLRRQHSY. At Ser1303 the chain carries Phosphoserine; by DAPK1. The residue at position 1474 (Tyr1474) is a Phosphotyrosine. The short motif at 1482 to 1484 is the PDZ-binding element; it reads SDV.

The protein belongs to the glutamate-gated ion channel (TC 1.A.10.1) family. NR2B/GRIN2B subfamily. In terms of assembly, heterotetramer. Forms heterotetrameric channels composed of two GluN1/zeta subunits (GRIN1), and two identical GluN2/epsilon subunits (GRIN2A, GRIN2B, GRIN2C or GRIN2D) or GluN3 subunits (GRIN3A or GRIN3B) (in vitro). Can also form heterotetrameric channels that contain at least two GluN1 subunits and at least two different GluN2 subunits (or a combination of one GluN2 and one GluN3 subunits) (in vitro). In vivo, the subunit composition may depend on the expression levels of the different subunits. Found in a complex with GRIN1 and GRIN3B. Found in a complex with GRIN1, GRIN3A and PPP2CB. Interacts with PDZ domains of PATJ, DLG3 and DLG4. Interacts with HIP1 and NETO1. Interacts with MAGI3. Interacts with DAPK1. Found in a complex with GRIN1 and PRR7. Interacts with PRR7. Interacts with CAMK2A. Interacts with ARC; preventing ARC oligomerization. Interacts with TMEM25. Interacts (via the extreme C-terminus) with FRMPD2 (via the second PDZ domain); the interaction is direct and is likely to promote NMDAR-mediated neural signal transmission. Interacts with FAM81A; the interaction facilitates condensate formation via liquid-liquid phase separation. In terms of processing, phosphorylated on tyrosine residues. Phosphorylation at Ser-1303 by DAPK1 enhances synaptic NMDA receptor channel activity. Primarily found in the fronto-parieto-temporal cortex and hippocampus pyramidal cells, lower expression in the basal ganglia.

The protein resides in the cell membrane. The protein localises to the postsynaptic cell membrane. It is found in the cell projection. It localises to the dendrite. Its subcellular location is the late endosome. The protein resides in the lysosome. The protein localises to the cytoplasm. It is found in the cytoskeleton. It catalyses the reaction Ca(2+)(in) = Ca(2+)(out). It carries out the reaction Na(+)(in) = Na(+)(out). The enzyme catalyses K(+)(in) = K(+)(out). Component of N-methyl-D-aspartate (NMDA) receptors (NMDARs) that function as heterotetrameric, ligand-gated cation channels with high calcium permeability and voltage-dependent block by Mg(2+). Participates in synaptic plasticity for learning and memory formation by contributing to the long-term depression (LTD) of hippocampus membrane currents. Channel activation requires binding of the neurotransmitter L-glutamate to the GluN2 subunit, glycine or D-serine binding to the GluN1 subunit, plus membrane depolarization to eliminate channel inhibition by Mg(2+). NMDARs mediate simultaneously the potasium efflux and the influx of calcium and sodium. Each GluN2 subunit confers differential attributes to channel properties, including activation, deactivation and desensitization kinetics, pH sensitivity, Ca2(+) permeability, and binding to allosteric modulators. In concert with DAPK1 at extrasynaptic sites, acts as a central mediator for stroke damage. Its phosphorylation at Ser-1303 by DAPK1 enhances synaptic NMDA receptor channel activity inducing injurious Ca2+ influx through them, resulting in an irreversible neuronal death. The sequence is that of Glutamate receptor ionotropic, NMDA 2B from Homo sapiens (Human).